The sequence spans 373 residues: UDP-N-acetylglucosamine--N-acetylmuramyl-(pentapeptide) pyrophosphoryl-undecaprenol N-acetylglucosamine transferase (373 aa).

UDP-N-acetyl-alpha-D-glucosamine contacts are provided by residues 13-15, N124, R164, S192, and Q293; that span reads TGG.

The protein belongs to the glycosyltransferase 28 family. MurG subfamily.

Its subcellular location is the cell inner membrane. The enzyme catalyses di-trans,octa-cis-undecaprenyl diphospho-N-acetyl-alpha-D-muramoyl-L-alanyl-D-glutamyl-meso-2,6-diaminopimeloyl-D-alanyl-D-alanine + UDP-N-acetyl-alpha-D-glucosamine = di-trans,octa-cis-undecaprenyl diphospho-[N-acetyl-alpha-D-glucosaminyl-(1-&gt;4)]-N-acetyl-alpha-D-muramoyl-L-alanyl-D-glutamyl-meso-2,6-diaminopimeloyl-D-alanyl-D-alanine + UDP + H(+). The protein operates within cell wall biogenesis; peptidoglycan biosynthesis. In terms of biological role, cell wall formation. Catalyzes the transfer of a GlcNAc subunit on undecaprenyl-pyrophosphoryl-MurNAc-pentapeptide (lipid intermediate I) to form undecaprenyl-pyrophosphoryl-MurNAc-(pentapeptide)GlcNAc (lipid intermediate II). This chain is UDP-N-acetylglucosamine--N-acetylmuramyl-(pentapeptide) pyrophosphoryl-undecaprenol N-acetylglucosamine transferase, found in Allorhizobium ampelinum (strain ATCC BAA-846 / DSM 112012 / S4) (Agrobacterium vitis (strain S4)).